A 274-amino-acid polypeptide reads, in one-letter code: Orotidine 5'-phosphate decarboxylase (274 aa).

Residues 1-15 (MSAGRRSSGGRSAAA) show a composition bias toward low complexity. The interval 1–21 (MSAGRRSSGGRSAAAPRFTPP) is disordered. Residues Asp32, Lys54, 99–108 (DLKLHDIPAT), Thr154, Arg215, Gln224, Gly244, and Arg245 each bind substrate. Lys101 functions as the Proton donor in the catalytic mechanism.

This sequence belongs to the OMP decarboxylase family. Type 1 subfamily. Homodimer.

The enzyme catalyses orotidine 5'-phosphate + H(+) = UMP + CO2. The protein operates within pyrimidine metabolism; UMP biosynthesis via de novo pathway; UMP from orotate: step 2/2. In terms of biological role, catalyzes the decarboxylation of orotidine 5'-monophosphate (OMP) to uridine 5'-monophosphate (UMP). The sequence is that of Orotidine 5'-phosphate decarboxylase from Frankia casuarinae (strain DSM 45818 / CECT 9043 / HFP020203 / CcI3).